Here is a 584-residue protein sequence, read N- to C-terminus: Long-chain-fatty-acid--AMP ligase FadD26 (584 aa).

Belongs to the ATP-dependent AMP-binding enzyme family.

It catalyses the reaction holo-[(phenol)carboxyphthiodiolenone synthase] + a long-chain fatty acid + ATP = a long-chain fatty acyl-[(phenol)carboxyphthiodiolenone synthase] + AMP + diphosphate. The catalysed reaction is eicosanoate + holo-[(phenol)carboxyphthiodiolenone synthase] + ATP = icosanoyl-[(phenol)carboxyphthiodiolenone synthase] + AMP + diphosphate. It carries out the reaction holo-[(phenol)carboxyphthiodiolenone synthase] + docosanoate + ATP = docosanoyl-[(phenol)carboxyphthiodiolenone synthase] + AMP + diphosphate. Its pathway is lipid metabolism; fatty acid biosynthesis. Functionally, catalyzes the activation of long-chain fatty acids as acyl-adenylates (acyl-AMP), which are then transferred to the multifunctional polyketide synthase PpsA for further chain extension. Catalyzes the adenylation of the long-chain fatty acids eicosanoate (C20) or docosanoate (C22), and potentially the very-long-chain fatty acid lignocerate (C24). Involved in the biosynthesis of phthiocerol dimycocerosate (DIM A) and phthiodiolone dimycocerosate (DIM B). The polypeptide is Long-chain-fatty-acid--AMP ligase FadD26 (Mycobacterium marinum (strain ATCC BAA-535 / M)).